The chain runs to 928 residues: Isoleucine--tRNA ligase (928 aa).

The 'HIGH' region motif lies at 57–67 (PFANGNIHMGH). Glu-552 is an L-isoleucyl-5'-AMP binding site. The 'KMSKS' region signature appears at 593-597 (KMSKS). ATP is bound at residue Lys-596. 4 residues coordinate Zn(2+): Cys-887, Cys-890, Cys-907, and Cys-910.

It belongs to the class-I aminoacyl-tRNA synthetase family. IleS type 1 subfamily. As to quaternary structure, monomer. Zn(2+) is required as a cofactor.

It localises to the cytoplasm. It catalyses the reaction tRNA(Ile) + L-isoleucine + ATP = L-isoleucyl-tRNA(Ile) + AMP + diphosphate. Its function is as follows. Catalyzes the attachment of isoleucine to tRNA(Ile). As IleRS can inadvertently accommodate and process structurally similar amino acids such as valine, to avoid such errors it has two additional distinct tRNA(Ile)-dependent editing activities. One activity is designated as 'pretransfer' editing and involves the hydrolysis of activated Val-AMP. The other activity is designated 'posttransfer' editing and involves deacylation of mischarged Val-tRNA(Ile). This is Isoleucine--tRNA ligase from Latilactobacillus sakei subsp. sakei (strain 23K) (Lactobacillus sakei subsp. sakei).